We begin with the raw amino-acid sequence, 462 residues long: Argininosuccinate lyase (462 aa).

Belongs to the lyase 1 family. Argininosuccinate lyase subfamily.

The protein localises to the cytoplasm. The catalysed reaction is 2-(N(omega)-L-arginino)succinate = fumarate + L-arginine. It functions in the pathway amino-acid biosynthesis; L-arginine biosynthesis; L-arginine from L-ornithine and carbamoyl phosphate: step 3/3. This is Argininosuccinate lyase from Bacillus cereus (strain AH820).